The primary structure comprises 483 residues: NADH-quinone oxidoreductase subunit N (483 aa).

The next 13 helical transmembrane spans lie at 9-29, 35-55, 69-89, 104-124, 158-178, 201-221, 234-254, 272-292, 297-317, 325-345, 368-388, 404-424, and 449-469; these read LVLP…WGAF, PLFT…AVVG, AAAT…IVLG, AVLV…GDLI, FVLG…IYGF, VGLL…VSAA, APTS…MMMF, VLII…LAQT, LWAY…ATGG, LLFM…LQAL, IAVA…FSGF, VLLQ…AFYY, and AVGF…LIWL.

It belongs to the complex I subunit 2 family. As to quaternary structure, NDH-1 is composed of 14 different subunits. Subunits NuoA, H, J, K, L, M, N constitute the membrane sector of the complex.

It is found in the cell inner membrane. The catalysed reaction is a quinone + NADH + 5 H(+)(in) = a quinol + NAD(+) + 4 H(+)(out). Its function is as follows. NDH-1 shuttles electrons from NADH, via FMN and iron-sulfur (Fe-S) centers, to quinones in the respiratory chain. The immediate electron acceptor for the enzyme in this species is believed to be ubiquinone. Couples the redox reaction to proton translocation (for every two electrons transferred, four hydrogen ions are translocated across the cytoplasmic membrane), and thus conserves the redox energy in a proton gradient. This is NADH-quinone oxidoreductase subunit N from Caulobacter sp. (strain K31).